The chain runs to 391 residues: Steroid 3-ketoacyl-CoA thiolase (391 aa).

The active-site Acyl-thioester intermediate is the Cys-93. Residues Gln-151, 221-223 (RET), and Ser-246 contribute to the CoA site. Residues His-347 and Cys-377 each act as proton acceptor in the active site. Gly-379 serves as a coordination point for substrate.

Belongs to the thiolase-like superfamily. Thiolase family. As to quaternary structure, dimer of dimers.

It carries out the reaction an acyl-CoA + acetyl-CoA = a 3-oxoacyl-CoA + CoA. The enzyme catalyses 3-oxochol-4-en-22-oyl-CoA + acetyl-CoA = 3,22-dioxochol-4-en-24-oyl-CoA + CoA. It functions in the pathway steroid metabolism; cholesterol degradation. Involved in the beta-oxidation of the cholesterol side chain. It is important for utilization of cholesterol as a sole carbon source in vitro and for full virulence in the chronic stage of mouse lung infection. Catalyzes the thiolysis of 3,22-dioxochol-4-en-24-oyl-CoA to yield 3-oxo-4-pregnene-20-carboxyl-CoA (3-OPC-CoA) and acetyl-CoA. Also able to use acetoacetyl-CoA (AcAcCoA) as substrate. This chain is Steroid 3-ketoacyl-CoA thiolase (fadA5), found in Mycobacterium tuberculosis (strain ATCC 25618 / H37Rv).